The primary structure comprises 418 residues: Actin-related protein 3 (418 aa).

Residue Ala-2 is modified to N-acetylalanine.

The protein belongs to the actin family. ARP3 subfamily. In terms of assembly, component of the Arp2/3 complex composed of ACTR2/ARP2, ACTR3/ARP3, ARPC1B/p41-ARC, ARPC2/p34-ARC, ARPC3/p21-ARC, ARPC4/p20-ARC and ARPC5/p16-ARC. In terms of tissue distribution, detected in fibroblasts.

The protein localises to the cytoplasm. It localises to the cytoskeleton. The protein resides in the cell projection. Its subcellular location is the nucleus. Functionally, ATP-binding component of the Arp2/3 complex, a multiprotein complex that mediates actin polymerization upon stimulation by nucleation-promoting factor (NPF). The Arp2/3 complex mediates the formation of branched actin networks in the cytoplasm, providing the force for cell motility. Seems to contact the pointed end of the daughter actin filament. In addition to its role in the cytoplasmic cytoskeleton, the Arp2/3 complex also promotes actin polymerization in the nucleus, thereby regulating gene transcription and repair of damaged DNA. The Arp2/3 complex promotes homologous recombination (HR) repair in response to DNA damage by promoting nuclear actin polymerization, leading to drive motility of double-strand breaks (DSBs). In Gallus gallus (Chicken), this protein is Actin-related protein 3 (ACTR3).